A 469-amino-acid polypeptide reads, in one-letter code: Transcription factor SOX-10 (469 aa).

5 disordered regions span residues 1-70 (MAEE…DDDK), 163-203 (LRMQ…QGGA), 215-278 (LDHR…DFGN), 357-378 (AQVK…QPST), and 436-469 (RPLY…LSRP). Residues 23–32 (LSPGSAPSLG) are compositionally biased toward low complexity. At Ser24 the chain carries Phosphoserine. Residues 33-44 (PDGGGGGGGGSG) are compositionally biased toward gly residues. A dimerization (DIM) region spans residues 65 to 105 (EADDDKFPVCIREAVSQVLSGYDWTLVPMPVRVNGASKSKP). Positions 107-175 (VKRPMNAFMV…QHKKDHPDYK (69 aa)) form a DNA-binding region, HMG box. 2 stretches are compositionally biased toward basic and acidic residues: residues 163 to 176 (LRMQ…DYKY) and 257 to 274 (ADPK…KPHI). Residues 231–313 (PEHPSGQSHG…LPPNGHPGHV (83 aa)) are transactivation domain (TAM). The transactivation domain (TAC) stretch occupies residues 356–469 (KAQVKTETAG…QPVYTTLSRP (114 aa)). Residues 443–469 (SDPSPSGPQSHSPTHWEQPVYTTLSRP) are compositionally biased toward polar residues.

As to quaternary structure, monomer. Interacts with ARMCX3 at the mitochondrial outer membrane surface. Interacts with PAX3.

It is found in the cytoplasm. The protein localises to the nucleus. Its subcellular location is the mitochondrion outer membrane. Its function is as follows. Transcription factor that plays a central role in developing and mature glia. Specifically activates expression of myelin genes, during oligodendrocyte (OL) maturation, such as DUSP15 and MYRF, thereby playing a central role in oligodendrocyte maturation and CNS myelination. Once induced, MYRF cooperates with SOX10 to implement the myelination program. Transcriptional activator of MITF, acting synergistically with PAX3. Transcriptional activator of MBP, via binding to the gene promoter. The polypeptide is Transcription factor SOX-10 (SOX10) (Sus scrofa (Pig)).